The following is a 280-amino-acid chain: HCLS1-associated protein X-1 (280 aa).

Ser-2 is subject to N-acetylserine. A required for localization in mitochondria region spans residues 2–45 (SVFDLFRGFFGFPGPRSHRDPFFGGMTRDDDDDDDDDDEAEEDR). 2 disordered regions span residues 12 to 70 (GFPG…SFSP) and 100 to 263 (TLPS…SALD). Residues 30–43 (DDDDDDDDDDEAEE) show a composition bias toward acidic residues. An involved in HCLS1 binding region spans residues 115–280 (TPGERLREGQ…LLLGRWFRSR (166 aa)). 2 stretches are compositionally biased toward basic and acidic residues: residues 116-125 (PGERLREGQT) and 134-154 (PDSHQPRIFEGVLESHAKPES). The segment at 176 to 207 (VSPHSRAKEDKDLDSQVSQEGLGPLLQPQPKS) is involved in CASP9 binding. The interval 177–248 (SPHSRAKEDK…TTVTHQEAHD (72 aa)) is involved in GNA13 binding. Positions 184–280 (EDKDLDSQVS…LLLGRWFRSR (97 aa)) are required for localization in sarcoplasmic reticulum. The tract at residues 185-280 (DKDLDSQVSQ…LLLGRWFRSR (96 aa)) is involved in PKD2 binding. 2 positions are modified to phosphoserine: Ser-190 and Ser-193. Residues 204-226 (QPKSYFKSISVTKITKPDGTVEE) form an involved in PLN binding region. An involved in ATP2A2 binding region spans residues 204–246 (QPKSYFKSISVTKITKPDGTVEERRTVVDSEGRRETTVTHQEA). Residues 211–280 (SISVTKITKP…LLLGRWFRSR (70 aa)) form a mediates interaction with UCP3 region. Residues 218 to 256 (TKPDGTVEERRTVVDSEGRRETTVTHQEAHDSSRSDPDS) show a composition bias toward basic and acidic residues. The tract at residues 271–280 (LLLGRWFRSR) is required for ITGB6 binding.

Belongs to the HAX1 family. Interacts with ABCB1, ABCB4 and ABCB11. Directly associates with HCLS1/HS1, through binding to its N-terminal region. Interacts with CTTN. Interacts with PKD2. Interacts with GNA13. Interacts with CASP9. Interacts with ITGB6. Interacts with PLN and ATP2A2; these interactions are inhibited by calcium. Interacts with GRB7. Interacts (via C-terminus) with XIAP/BIRC4 (via BIR 2 domain and BIR 3 domain) and this interaction blocks ubiquitination of XIAP/BIRC4. Interacts with TPC2. Interacts with KCNC3. Interacts with XPO1. Interacts with RNF217. Interacts with UCP3; the interaction is direct and calcium-dependent. Interacts with MAPRE2; this interaction regulates cell migration in keratinocytes. As to expression, ubiquitous, with highest levels in kidney and liver (at protein level).

The protein resides in the mitochondrion matrix. It localises to the endoplasmic reticulum. The protein localises to the nucleus membrane. Its subcellular location is the cytoplasmic vesicle. It is found in the cytoplasm. The protein resides in the cell cortex. It localises to the cell membrane. The protein localises to the sarcoplasmic reticulum. Its subcellular location is the P-body. It is found in the nucleus. In terms of biological role, recruits the Arp2/3 complex to the cell cortex and regulates reorganization of the cortical actin cytoskeleton via its interaction with KCNC3 and the Arp2/3 complex. Slows down the rate of inactivation of KCNC3 channels. Promotes GNA13-mediated cell migration. Involved in the clathrin-mediated endocytosis pathway. May be involved in internalization of ABC transporters such as ABCB11. May inhibit CASP9 and CASP3. Promotes cell survival. May regulate intracellular calcium pools. This Mus musculus (Mouse) protein is HCLS1-associated protein X-1 (Hax1).